A 313-amino-acid chain; its full sequence is Probable inactive peptidyl-prolyl cis-trans isomerase-like 6 (313 aa).

A PPIase cyclophilin-type domain is found at 147–310 (YLDICIDLSP…LLCSIADSGV (164 aa)).

It belongs to the cyclophilin-type PPIase family.

Probable inactive PPIase with no peptidyl-prolyl cis-trans isomerase activity. This Mus musculus (Mouse) protein is Probable inactive peptidyl-prolyl cis-trans isomerase-like 6.